The sequence spans 521 residues: Ribonuclease Y (521 aa).

Residues 5-25 (TVWILISILLATVGAVVGFFV) traverse the membrane as a helical segment. The tract at residues 87 to 117 (KQENRLMQKEENLDRKDETLDNRERQLEKKE) is disordered. The region spanning 211–274 (TVSVVNLPND…ETARIALDKL (64 aa)) is the KH domain. In terms of domain architecture, HD spans 337 to 430 (VLKHSMEVAY…VAAADALSAA (94 aa)).

Belongs to the RNase Y family.

The protein resides in the cell membrane. In terms of biological role, endoribonuclease that initiates mRNA decay. The chain is Ribonuclease Y from Bacillus mycoides (strain KBAB4) (Bacillus weihenstephanensis).